Consider the following 659-residue polypeptide: PAN2-PAN3 deadenylation complex subunit PAN3 (659 aa).

Disordered stretches follow at residues 1–26 (MASA…AREN) and 103–132 (PKAA…QENI). The segment at 26–55 (NAKDTLCRNVTIYGRCRYEDKGCAFNHDPL) adopts a C3H1-type zinc-finger fold. Over residues 115–132 (SVASRSNTSTPNSRQENI) the composition is skewed to polar residues. The interval 262–522 (QTLPNTQLPA…NIDIFITGIS (261 aa)) is pseudokinase domain. ATP-binding positions include R314, 363–370 (DYYPLSKT), and 422–423 (SK). Positions 523–561 (SQLMSTFDSALHLDDQLTSDLSRELENGRLVRLMTKLNL) form a coiled coil. Residues 562 to 659 (VNERPEYEHD…ALLKPARRMH (98 aa)) form a knob domain region.

The protein belongs to the protein kinase superfamily. PAN3 family. Homodimer. Forms a heterotrimer with a catalytic subunit pan2 to form the poly(A)-nuclease (PAN) deadenylation complex. Interacts (via PAM-2 motif) with poly(A)-binding protein pab1 (via PABC domain), conferring substrate specificity of the enzyme complex.

The protein resides in the cytoplasm. Its function is as follows. Regulatory subunit of the poly(A)-nuclease (PAN) deadenylation complex, one of two cytoplasmic mRNA deadenylases involved in mRNA turnover. PAN specifically shortens poly(A) tails of RNA and the activity is stimulated by poly(A)-binding protein pab1. PAN deadenylation is followed by rapid degradation of the shortened mRNA tails by the CCR4-NOT complex. Deadenylated mRNAs are then degraded by two alternative mechanisms, namely exosome-mediated 3'-5' exonucleolytic degradation, or deadenylation-dependent mRNA decaping and subsequent 5'-3' exonucleolytic degradation by xrn1. May also be involved in post-transcriptional maturation of mRNA poly(A) tails. pan3 acts as a positive regulator for PAN activity, recruiting the catalytic subunit pan2 to mRNA via its interaction with RNA and with pab1. The sequence is that of PAN2-PAN3 deadenylation complex subunit PAN3 from Aspergillus clavatus (strain ATCC 1007 / CBS 513.65 / DSM 816 / NCTC 3887 / NRRL 1 / QM 1276 / 107).